A 442-amino-acid chain; its full sequence is MATVLIVGRPNVGKSTLFNRLVGGRRAIIDDQPGVTRDFVFGRVFWQHKSFEVVDTCGLFDSPKDIIEEKMKEVTLALLSEGDLLLFVVDGRKGLTSADMDIAETLRKSKKRVILVANKVENVDKFTLEVLPELYSLGFGEPIPISAEHGLNIDVLLEKIIKTLEEAGHLLDYEPEKEEDNLKVAIIGKPNAGKSSLFNSIVGSDRSLVTEIPGTTRDMVDETIEIDGMPVTFIDTAGMRRKSKVGVKNVEYYSVMRAVDAIERSDICILVIDATLGISNQDQRIAGLVEKRGKGIITVFNKSDLLNEKHKESLLSSFERELYFIDYSPVVFTSATEGFGIDELLDKLFLVAEKIDLRIPTGLLNNLISRYTLSTPPVGRKNKKAKIYYAAQIDTRPPLIMLKVNDPALFTEPYLRGIRSTIRMNIDPFEGTPIFIKLRRKK.

2 consecutive EngA-type G domains span residues 2 to 168 (ATVL…EEAG) and 182 to 356 (LKVA…EKID). GTP-binding positions include 8-15 (GRPNVGKS), 55-59 (DTCGL), 118-121 (NKVE), 188-195 (GKPNAGKS), 235-239 (DTAGM), and 301-304 (NKSD). The KH-like domain occupies 357–442 (LRIPTGLLNN…PIFIKLRRKK (86 aa)).

It belongs to the TRAFAC class TrmE-Era-EngA-EngB-Septin-like GTPase superfamily. EngA (Der) GTPase family. In terms of assembly, associates with the 50S ribosomal subunit.

Functionally, GTPase that plays an essential role in the late steps of ribosome biogenesis. The polypeptide is GTPase Der (Kosmotoga olearia (strain ATCC BAA-1733 / DSM 21960 / TBF 19.5.1)).